The chain runs to 277 residues: Transmembrane protein 53 (277 aa).

A helical transmembrane segment spans residues 171 to 191 (LLLLVAFALVVVLFHVLLAPI).

It belongs to the TMEM53 family. In terms of tissue distribution, widely expressed.

It localises to the nucleus outer membrane. Functionally, ensures normal bone formation, through the negative regulation of bone morphogenetic protein (BMP) signaling in osteoblast lineage cells by blocking cytoplasm-nucleus translocation of phosphorylated SMAD1/5/9 proteins. In Homo sapiens (Human), this protein is Transmembrane protein 53 (TMEM53).